The chain runs to 565 residues: Probable alpha-L-arabinofuranosidase A (565 aa).

An N-terminal signal peptide occupies residues 1-19; sequence MPLSAAIKSSLSVSVRADA. N71, N91, N128, N303, N362, N486, and N501 each carry an N-linked (GlcNAc...) asparagine glycan.

This sequence belongs to the glycosyl hydrolase 51 family.

The protein localises to the secreted. It carries out the reaction Hydrolysis of terminal non-reducing alpha-L-arabinofuranoside residues in alpha-L-arabinosides.. Its pathway is glycan metabolism; L-arabinan degradation. Functionally, alpha-L-arabinofuranosidase involved in the degradation of arabinoxylan, a major component of plant hemicellulose. Acts only on small linear 1,5-alpha-linked L-arabinofuranosyl oligosaccharides. The sequence is that of Probable alpha-L-arabinofuranosidase A (abfA) from Emericella nidulans (strain FGSC A4 / ATCC 38163 / CBS 112.46 / NRRL 194 / M139) (Aspergillus nidulans).